Consider the following 158-residue polypeptide: uncharacterized protein (158 aa).

Transmembrane regions (helical) follow at residues 66 to 86 (LLII…PWIM) and 94 to 114 (FFSL…SLTI).

The protein resides in the membrane. This is an uncharacterized protein from Saccharomyces cerevisiae (strain ATCC 204508 / S288c) (Baker's yeast).